The primary structure comprises 1581 residues: Maestro heat-like repeat-containing protein family member 2B (1581 aa).

HEAT repeat units lie at residues 123–160 (FMMMTLLTMQTMLRLVEDENMRQTFCIALENFSKSIYK), 305–342 (ANPVDLLDFFDEQIRSTNEAVRTGILTLLRSTINAEEP), 401–441 (MSNR…LVIG), 464–501 (DYLFNIIRILIMAEEKKKRDIQESTALVVSTGAVKLPS), 526–543 (AIGLLKIMPEIIHPKLAE), 544–580 (MWKTRMPALLQPLEGSNASIVLWETMLLQLLKESLWK), 658–695 (ENHLDIVLNVLKTFQDKEKFFVNRCKGIFSGKKSLTKT), 773–815 (TYKE…LKPA), 960–997 (CQEVDRLQGLQEGLDSEDEQVQIKISSKIAKIVCKFIP), 1017–1055 (PLCTKACGIWMIAALKEHGALLEDQLLEILSTIYHHMPV), 1112–1150 (KLMRALIKKLVARLEDDIAGTEAISVACAIYEVILTGAH), 1153–1191 (HLYPELFTLLLKLVSCSLGQKMPMSTLSQRRRVMQLGER), 1254–1291 (GVILDIMEHLLSSLTSSSENYRITGMAFFSELMKEPIL), 1295–1332 (GNLRDVLIFMDQNARDSNAILRQMAIRGLGNTACGAPH), 1359–1379 (CESLKALKKILELLTERDINF), and 1380–1416 (YFKEIVLQTRTFFEDEQDDVRLTAISLFEDLATLTGR).

Found in a complex at least composed of MROH2B isoform 2, PRKACA isoform 2 and TCP11. Interacts with PRKACA isoform 2. Interacts with TCP11. In terms of processing, constitutively phosphorylated on serine and threonine residues in acrosomal region of the sperm head, midpiece and flagellar regions of noncapacitated spermatozoa. Phosphorylation on tyrosine residues increases upon sperm capacitation within the acrosomal and tail regions in a protein kinase A (PKA)-dependent signaling pathway. As to expression, expressed strongly in round spermatids and fully mature spermatozoa. Expressed weakly in pachytene spermatocytes (at protein level). Isoform 2 is specifically expressed in the testis. Isoform 2 is expressed in pachytene spermatocytes and round spermatids. Isoform 3 is weakly expressed in testis.

Its subcellular location is the cytoplasm. It localises to the cytoplasmic vesicle. It is found in the secretory vesicle. The protein localises to the acrosome. The protein resides in the cell projection. Its subcellular location is the cilium. It localises to the flagellum. Functionally, may play a role in the process of sperm capacitation. The protein is Maestro heat-like repeat-containing protein family member 2B of Mus musculus (Mouse).